A 1158-amino-acid chain; its full sequence is Condensin complex subunit 1 (1158 aa).

A disordered region spans residues 800-826 (HENTTSNDDHAMDEDLDDSPEEETLKD). Over residues 810–826 (AMDEDLDDSPEEETLKD) the composition is skewed to acidic residues.

It belongs to the CND1 (condensin subunit 1) family. Component of the condensin complex, which contains the cut14/smc2 and cut3/smc2 heterodimer, and three non SMC subunits that probably regulate the complex: cnd1, cnd2 and cnd3.

It localises to the nucleus. The protein localises to the cytoplasm. Its subcellular location is the chromosome. Its function is as follows. Regulatory subunit of the condensin complex, a complex required for conversion of interphase chromatin into mitotic-like condense chromosomes. The condensin complex probably introduces positive supercoils into relaxed DNA in the presence of type I topoisomerases and converts nicked DNA into positive knotted forms in the presence of type II topoisomerases. The condensin complex probably also plays a role during interphase. This chain is Condensin complex subunit 1 (cnd1), found in Schizosaccharomyces pombe (strain 972 / ATCC 24843) (Fission yeast).